The primary structure comprises 120 residues: Ribonuclease P protein component (120 aa).

This sequence belongs to the RnpA family. In terms of assembly, consists of a catalytic RNA component (M1 or rnpB) and a protein subunit.

The catalysed reaction is Endonucleolytic cleavage of RNA, removing 5'-extranucleotides from tRNA precursor.. In terms of biological role, RNaseP catalyzes the removal of the 5'-leader sequence from pre-tRNA to produce the mature 5'-terminus. It can also cleave other RNA substrates such as 4.5S RNA. The protein component plays an auxiliary but essential role in vivo by binding to the 5'-leader sequence and broadening the substrate specificity of the ribozyme. The protein is Ribonuclease P protein component of Rickettsia bellii (strain RML369-C).